The following is a 265-amino-acid chain: MKENIGDCTIDLTVTSPPYDDLRNYNGYSFNFEETAQELYRVTKEGGVVVWVVGDKTHKGSETGSSFRQALYFKELGFNLHDTMIYEKDSISFPDKNRYYQIFEYMFIFSKGKPKTINLLADRKNKWYNGKKHIKGHYRKMDGEKVRHHKQNLLKEFGVRFNIWRIPNGHQKSTLDKIAFQHPAIFPEKLAEDHILSWSNEGDIVFDPFMGSGTTAKMAALNNRKYIGTEISKEYCDIANERLKNYIILHKRMEGKGYRLPQVHS.

Belongs to the N(4)/N(6)-methyltransferase family. N(4) subfamily.

The catalysed reaction is a 2'-deoxycytidine in DNA + S-adenosyl-L-methionine = an N(4)-methyl-2'-deoxycytidine in DNA + S-adenosyl-L-homocysteine + H(+). Functionally, a beta subtype methylase, recognizes the double-stranded sequence 5'-GGATCC-3', methylates C-? on both strands. No endonuclease has been identified for this methylase, although it is speculated it might protect against BamHI. This Bacillus amyloliquefaciens (Bacillus velezensis) protein is Orphan methyltransferase M.BamHII (bamHIIM).